Reading from the N-terminus, the 441-residue chain is Plasmepsin VI (441 aa).

At 1 to 7 the chain is on the cytoplasmic side; sequence MTNFCIK. A helical; Signal-anchor for type II membrane protein transmembrane segment spans residues 8–28; sequence SYLFLYLSFLLFFDIITIFHV. At 29–441 the chain is on the extracellular side; sequence SSIRISTVLK…VGVVKSNHNF (413 aa). The Peptidase A1 domain occupies 109–435; it reads FIGDIEIGNP…DNDHKLVGVV (327 aa). Catalysis depends on residues D127 and D324.

Belongs to the peptidase A1 family.

It localises to the membrane. During the development in the mosquito midgut, plays a role in sporozoite egress from oocysts. This is Plasmepsin VI from Plasmodium berghei (strain Anka).